The sequence spans 157 residues: MRIGHGYDVHRFGEGDFITLGGVRIPHKHGLVAHSDGDVLLHALSDALLGAAALGDIGKHFPDTDPRFKGADSRALLRHVVAIVAEKGWKVGNVDATIVAQAPKMAPHIETMRGSIAEDLGVAVDQVNVKATTTERLGFTGREEGIAVHAVALLMAR.

Residues Asp8 and His10 each contribute to the a divalent metal cation site. 4-CDP-2-C-methyl-D-erythritol 2-phosphate contacts are provided by residues 8–10 (DVH) and 34–35 (HS). Residue His42 coordinates a divalent metal cation. Residues 56-58 (DIG), 61-65 (FPDTD), 100-106 (AQAPKMA), 132-135 (TTTE), Phe139, and Arg142 each bind 4-CDP-2-C-methyl-D-erythritol 2-phosphate.

It belongs to the IspF family. As to quaternary structure, homotrimer. It depends on a divalent metal cation as a cofactor.

It catalyses the reaction 4-CDP-2-C-methyl-D-erythritol 2-phosphate = 2-C-methyl-D-erythritol 2,4-cyclic diphosphate + CMP. The protein operates within isoprenoid biosynthesis; isopentenyl diphosphate biosynthesis via DXP pathway; isopentenyl diphosphate from 1-deoxy-D-xylulose 5-phosphate: step 4/6. Its function is as follows. Involved in the biosynthesis of isopentenyl diphosphate (IPP) and dimethylallyl diphosphate (DMAPP), two major building blocks of isoprenoid compounds. Catalyzes the conversion of 4-diphosphocytidyl-2-C-methyl-D-erythritol 2-phosphate (CDP-ME2P) to 2-C-methyl-D-erythritol 2,4-cyclodiphosphate (ME-CPP) with a corresponding release of cytidine 5-monophosphate (CMP). The polypeptide is 2-C-methyl-D-erythritol 2,4-cyclodiphosphate synthase (Pseudomonas aeruginosa (strain UCBPP-PA14)).